A 549-amino-acid polypeptide reads, in one-letter code: CTP synthase (549 aa).

The amidoligase domain stretch occupies residues 1-266 (MSAKYIFVTG…DKLALRYLHL (266 aa)). Ser-14 provides a ligand contact to CTP. Ser-14 contacts UTP. Residues 15–20 (SLGKGL) and Asp-72 each bind ATP. Mg(2+) is bound by residues Asp-72 and Glu-140. CTP contacts are provided by residues 147 to 149 (DIE), 187 to 192 (KTKPTQ), and Lys-223. Residues 187–192 (KTKPTQ) and Lys-223 contribute to the UTP site. Position 239–241 (239–241 (KDV)) interacts with ATP. The Glutamine amidotransferase type-1 domain maps to 291 to 533 (SIGIVGKYVE…VKAAYQNHKP (243 aa)). L-glutamine is bound at residue Gly-353. Residue Cys-380 is the Nucleophile; for glutamine hydrolysis of the active site. Residues 381–384 (LGMQ), Glu-404, and Arg-461 contribute to the L-glutamine site. Active-site residues include His-506 and Glu-508.

The protein belongs to the CTP synthase family. As to quaternary structure, homotetramer.

The catalysed reaction is UTP + L-glutamine + ATP + H2O = CTP + L-glutamate + ADP + phosphate + 2 H(+). The enzyme catalyses L-glutamine + H2O = L-glutamate + NH4(+). It catalyses the reaction UTP + NH4(+) + ATP = CTP + ADP + phosphate + 2 H(+). It participates in pyrimidine metabolism; CTP biosynthesis via de novo pathway; CTP from UDP: step 2/2. With respect to regulation, allosterically activated by GTP, when glutamine is the substrate; GTP has no effect on the reaction when ammonia is the substrate. The allosteric effector GTP functions by stabilizing the protein conformation that binds the tetrahedral intermediate(s) formed during glutamine hydrolysis. Inhibited by the product CTP, via allosteric rather than competitive inhibition. Its function is as follows. Catalyzes the ATP-dependent amination of UTP to CTP with either L-glutamine or ammonia as the source of nitrogen. Regulates intracellular CTP levels through interactions with the four ribonucleotide triphosphates. The chain is CTP synthase from Acidobacterium capsulatum (strain ATCC 51196 / DSM 11244 / BCRC 80197 / JCM 7670 / NBRC 15755 / NCIMB 13165 / 161).